Reading from the N-terminus, the 284-residue chain is Small ribosomal subunit protein uS5y/uS5u/uS5v (284 aa).

Basic and acidic residues predominate over residues 1–19; it reads MAERGGESGAERGGDRGDF. Positions 1 to 51 are disordered; sequence MAERGGESGAERGGDRGDFGRGFGGGRGGGRGRDRGPRGRGRRGGRASEET. Positions 20–29 are enriched in gly residues; that stretch reads GRGFGGGRGG. In terms of domain architecture, S5 DRBM spans 95–158; the sequence is LKDEVMKIMP…ILAKLSVVPV (64 aa).

Belongs to the universal ribosomal protein uS5 family.

The protein is Small ribosomal subunit protein uS5y/uS5u/uS5v (RPS2B) of Arabidopsis thaliana (Mouse-ear cress).